An 802-amino-acid chain; its full sequence is LPS-assembly protein LptD (802 aa).

An N-terminal signal peptide occupies residues Met1–Ala25.

This sequence belongs to the LptD family. In terms of assembly, component of the lipopolysaccharide transport and assembly complex. Interacts with LptE and LptA.

It localises to the cell outer membrane. Its function is as follows. Together with LptE, is involved in the assembly of lipopolysaccharide (LPS) at the surface of the outer membrane. This Neisseria meningitidis serogroup B (strain ATCC BAA-335 / MC58) protein is LPS-assembly protein LptD.